The sequence spans 180 residues: Adenine phosphoribosyltransferase (180 aa).

It belongs to the purine/pyrimidine phosphoribosyltransferase family. Homodimer.

Its subcellular location is the cytoplasm. It catalyses the reaction AMP + diphosphate = 5-phospho-alpha-D-ribose 1-diphosphate + adenine. It functions in the pathway purine metabolism; AMP biosynthesis via salvage pathway; AMP from adenine: step 1/1. Its function is as follows. Catalyzes a salvage reaction resulting in the formation of AMP, that is energically less costly than de novo synthesis. The protein is Adenine phosphoribosyltransferase of Actinobacillus succinogenes (strain ATCC 55618 / DSM 22257 / CCUG 43843 / 130Z).